A 339-amino-acid polypeptide reads, in one-letter code: Anthranilate phosphoribosyltransferase (339 aa).

5-phospho-alpha-D-ribose 1-diphosphate contacts are provided by residues glycine 81, 84–85 (GD), threonine 89, 91–94 (NIST), 109–117 (KHGNRNLSS), and threonine 121. Glycine 81 contributes to the anthranilate binding site. Serine 93 contributes to the Mg(2+) binding site. Anthranilate is bound at residue asparagine 112. Anthranilate is bound at residue arginine 167. Residues aspartate 226 and glutamate 227 each coordinate Mg(2+).

It belongs to the anthranilate phosphoribosyltransferase family. In terms of assembly, homodimer. Mg(2+) serves as cofactor.

It catalyses the reaction N-(5-phospho-beta-D-ribosyl)anthranilate + diphosphate = 5-phospho-alpha-D-ribose 1-diphosphate + anthranilate. The protein operates within amino-acid biosynthesis; L-tryptophan biosynthesis; L-tryptophan from chorismate: step 2/5. Functionally, catalyzes the transfer of the phosphoribosyl group of 5-phosphorylribose-1-pyrophosphate (PRPP) to anthranilate to yield N-(5'-phosphoribosyl)-anthranilate (PRA). This Ruegeria pomeroyi (strain ATCC 700808 / DSM 15171 / DSS-3) (Silicibacter pomeroyi) protein is Anthranilate phosphoribosyltransferase.